The chain runs to 160 residues: MLTAVYPGTFDPITRGHEDLVRRAVRLFDRVVVAVAESRNKRPFFSMDERVAMTREVLADVPQVRVEGFSGLLIDFVAEQGAIAVLRGLRAASDFEYEFQLAGMNRNLKPDIETLFLTPSEQYMFISASMIREIAQFGGDVTPFVHPLVARRLSEKIREN.

Thr-9 is a substrate binding site. Residues 9–10 (TF) and His-17 contribute to the ATP site. Substrate contacts are provided by Lys-41, Leu-73, and Arg-87. ATP contacts are provided by residues 88–90 (GLR), Glu-98, and 123–129 (YMFISAS).

It belongs to the bacterial CoaD family. As to quaternary structure, homohexamer. It depends on Mg(2+) as a cofactor.

Its subcellular location is the cytoplasm. The enzyme catalyses (R)-4'-phosphopantetheine + ATP + H(+) = 3'-dephospho-CoA + diphosphate. Its pathway is cofactor biosynthesis; coenzyme A biosynthesis; CoA from (R)-pantothenate: step 4/5. Its function is as follows. Reversibly transfers an adenylyl group from ATP to 4'-phosphopantetheine, yielding dephospho-CoA (dPCoA) and pyrophosphate. This chain is Phosphopantetheine adenylyltransferase, found in Thiobacillus denitrificans (strain ATCC 25259 / T1).